A 384-amino-acid chain; its full sequence is DNA repair protein RAD51 homolog 2 (384 aa).

The interaction with RAD51C stretch occupies residues 1-75 (MGSKKLKRVG…TAYGIKAQRS (75 aa)). An ATP-binding site is contributed by 108 to 115 (GPPGCGKT).

The protein belongs to the RecA family. RAD51 subfamily. In terms of assembly, part of the BCDX2 complex consisting of RAD51B, RAD51C, RAD51D and XRCC2; the complex has a ring-like structure arranged into a flat disc around a central channel. The BCDX2 subcomplex RAD51B:RAD51C interacts with RAD51. Interacts with SWSAP1; involved in homologous recombination repair. Interacts with HELQ. Phosphorylated on tyrosine residues by BCR-ABL. As to expression, expressed in a wide range of tissues.

It is found in the nucleus. Involved in the homologous recombination repair (HRR) pathway of double-stranded DNA breaks arising during DNA replication or induced by DNA-damaging agents. May promote the assembly of presynaptic RAD51 nucleoprotein filaments. Binds single-stranded DNA and double-stranded DNA and has DNA-dependent ATPase activity. Part of the RAD51 paralog protein complex BCDX2 which acts in the BRCA1-BRCA2-dependent HR pathway. Upon DNA damage, BCDX2 acts downstream of BRCA2 recruitment and upstream of RAD51 recruitment. BCDX2 binds predominantly to the intersection of the four duplex arms of the Holliday junction and to junction of replication forks. The BCDX2 complex was originally reported to bind single-stranded DNA, single-stranded gaps in duplex DNA and specifically to nicks in duplex DNA. The BCDX2 subcomplex RAD51B:RAD51C exhibits single-stranded DNA-dependent ATPase activity suggesting an involvement in early stages of the HR pathway. This is DNA repair protein RAD51 homolog 2 (RAD51B) from Homo sapiens (Human).